Reading from the N-terminus, the 89-residue chain is Small ribosomal subunit protein uS15 (89 aa).

This sequence belongs to the universal ribosomal protein uS15 family. As to quaternary structure, part of the 30S ribosomal subunit. Forms a bridge to the 50S subunit in the 70S ribosome, contacting the 23S rRNA.

One of the primary rRNA binding proteins, it binds directly to 16S rRNA where it helps nucleate assembly of the platform of the 30S subunit by binding and bridging several RNA helices of the 16S rRNA. Its function is as follows. Forms an intersubunit bridge (bridge B4) with the 23S rRNA of the 50S subunit in the ribosome. The sequence is that of Small ribosomal subunit protein uS15 from Escherichia coli O157:H7.